Here is a 138-residue protein sequence, read N- to C-terminus: Large ribosomal subunit protein eL14A (138 aa).

At Ser2 the chain carries N-acetylserine.

This sequence belongs to the eukaryotic ribosomal protein eL14 family. Component of the large ribosomal subunit (LSU). Mature yeast ribosomes consist of a small (40S) and a large (60S) subunit. The 40S small subunit contains 1 molecule of ribosomal RNA (18S rRNA) and 33 different proteins (encoded by 57 genes). The large 60S subunit contains 3 rRNA molecules (25S, 5.8S and 5S rRNA) and 46 different proteins (encoded by 81 genes). In terms of processing, N-terminally acetylated by acetyltransferase NatA.

It is found in the cytoplasm. Component of the ribosome, a large ribonucleoprotein complex responsible for the synthesis of proteins in the cell. The small ribosomal subunit (SSU) binds messenger RNAs (mRNAs) and translates the encoded message by selecting cognate aminoacyl-transfer RNA (tRNA) molecules. The large subunit (LSU) contains the ribosomal catalytic site termed the peptidyl transferase center (PTC), which catalyzes the formation of peptide bonds, thereby polymerizing the amino acids delivered by tRNAs into a polypeptide chain. The nascent polypeptides leave the ribosome through a tunnel in the LSU and interact with protein factors that function in enzymatic processing, targeting, and the membrane insertion of nascent chains at the exit of the ribosomal tunnel. The protein is Large ribosomal subunit protein eL14A of Saccharomyces cerevisiae (strain ATCC 204508 / S288c) (Baker's yeast).